Reading from the N-terminus, the 124-residue chain is UPF0231 protein Sbal223_3655 (124 aa).

The protein belongs to the UPF0231 family.

In Shewanella baltica (strain OS223), this protein is UPF0231 protein Sbal223_3655.